The sequence spans 387 residues: Hydroxycarboxylic acid receptor 3 (387 aa).

At 1–28 (MNRHHLQDHFLEIDKKNCCVFRDDFIAK) the chain is on the extracellular side. A helical transmembrane segment spans residues 29–50 (VLPPVLGLEFIFGLLGNGLALW). At 51–63 (IFCFHLKSWKSSR) the chain is on the cytoplasmic side. Residues 64-85 (IFLFNLAVADFLLIICLPFVMD) traverse the membrane as a helical segment. At 86–102 (YYVRRSDWKFGDIPCRL) the chain is on the extracellular side. C100 and C177 are joined by a disulfide. A helical membrane pass occupies residues 103 to 123 (VLFMFAMNRQGSIIFLTVVAV). The Cytoplasmic portion of the chain corresponds to 124-142 (DRYFRVVHPHHALNKISNW). The chain crosses the membrane as a helical span at residues 143–163 (TAAIISCLLWGITVGLTVHLL). Over 164–194 (KKKLLIQNGTANVCISFSICHTFRWHEAMFL) the chain is Extracellular. The chain crosses the membrane as a helical span at residues 195-209 (LEFFLPLGIILFCSA). Residues 210–236 (RIIWSLRQRQMDRHAKIKRAITFIMVV) lie on the Cytoplasmic side of the membrane. A helical membrane pass occupies residues 237 to 256 (AIVFVICFLPSVVVRIHIFW). Residues 257–273 (LLHTSGTQNCEVYRSVD) are Extracellular-facing. A helical membrane pass occupies residues 274 to 298 (LAFFITLSFTYMNSMLDPVVYYFSS). The Cytoplasmic segment spans residues 299 to 387 (PSFPNFFSTL…LEKQLGCCIE (89 aa)). A disordered region spans residues 319–343 (GEPDNNRSTSVELTGDPNKTRGAPE).

The protein belongs to the G-protein coupled receptor 1 family. As to expression, expression largely restricted to adipose tissue and spleen.

Its subcellular location is the cell membrane. Its function is as follows. Receptor for 3-OH-octanoid acid mediates a negative feedback regulation of adipocyte lipolysis to counteract prolipolytic influences under conditions of physiological or pathological increases in beta-oxidation rates. Acts as a low affinity receptor for nicotinic acid. This pharmacological effect requires nicotinic acid doses that are much higher than those provided by a normal diet. The chain is Hydroxycarboxylic acid receptor 3 (HCAR3) from Homo sapiens (Human).